The sequence spans 323 residues: Aspartate carbamoyltransferase catalytic subunit (323 aa).

Carbamoyl phosphate-binding residues include Arg-71 and Thr-72. L-aspartate is bound at residue Lys-99. Carbamoyl phosphate is bound by residues Arg-121, His-151, and Gln-154. Arg-184 and Arg-239 together coordinate L-aspartate. Carbamoyl phosphate contacts are provided by Gly-280 and Pro-281.

The protein belongs to the aspartate/ornithine carbamoyltransferase superfamily. ATCase family. In terms of assembly, heterododecamer (2C3:3R2) of six catalytic PyrB chains organized as two trimers (C3), and six regulatory PyrI chains organized as three dimers (R2).

The catalysed reaction is carbamoyl phosphate + L-aspartate = N-carbamoyl-L-aspartate + phosphate + H(+). It functions in the pathway pyrimidine metabolism; UMP biosynthesis via de novo pathway; (S)-dihydroorotate from bicarbonate: step 2/3. Functionally, catalyzes the condensation of carbamoyl phosphate and aspartate to form carbamoyl aspartate and inorganic phosphate, the committed step in the de novo pyrimidine nucleotide biosynthesis pathway. In Cupriavidus metallidurans (strain ATCC 43123 / DSM 2839 / NBRC 102507 / CH34) (Ralstonia metallidurans), this protein is Aspartate carbamoyltransferase catalytic subunit.